The sequence spans 453 residues: Protein ECM18 (453 aa).

In terms of domain architecture, AB hydrolase-1 spans 130-435; sequence LLIHGYAASS…SGHNLFLDNP (306 aa). The HXXXXD motif signature appears at 428-433; sequence HNLFLD.

Belongs to the peptidase S33 family. ABHD4/ABHD5 subfamily.

The protein resides in the mitochondrion. In terms of biological role, may be involved in cell wall organization and biogenesis. The protein is Protein ECM18 (ECM18) of Saccharomyces cerevisiae (strain ATCC 204508 / S288c) (Baker's yeast).